Consider the following 590-residue polypeptide: Phosphomethylpyrimidine synthase (590 aa).

Residues asparagine 197, methionine 226, tyrosine 255, histidine 291, 311-313 (SRG), 352-355 (DGLR), and glutamate 391 contribute to the substrate site. Residue histidine 395 participates in Zn(2+) binding. Substrate is bound at residue tyrosine 418. Histidine 459 is a binding site for Zn(2+). [4Fe-4S] cluster contacts are provided by cysteine 539, cysteine 542, and cysteine 547.

Belongs to the ThiC family. It depends on [4Fe-4S] cluster as a cofactor.

It carries out the reaction 5-amino-1-(5-phospho-beta-D-ribosyl)imidazole + S-adenosyl-L-methionine = 4-amino-2-methyl-5-(phosphooxymethyl)pyrimidine + CO + 5'-deoxyadenosine + formate + L-methionine + 3 H(+). The protein operates within cofactor biosynthesis; thiamine diphosphate biosynthesis. Catalyzes the synthesis of the hydroxymethylpyrimidine phosphate (HMP-P) moiety of thiamine from aminoimidazole ribotide (AIR) in a radical S-adenosyl-L-methionine (SAM)-dependent reaction. This chain is Phosphomethylpyrimidine synthase, found in Bacillus velezensis (strain DSM 23117 / BGSC 10A6 / LMG 26770 / FZB42) (Bacillus amyloliquefaciens subsp. plantarum).